The chain runs to 232 residues: uncharacterized protein (232 aa).

Residues 86–95 are compositionally biased toward basic and acidic residues; it reads RGLPRPEFKA. A disordered region spans residues 86 to 107; sequence RGLPRPEFKANGHPSMDAEADD.

This is an uncharacterized protein from Sinorhizobium fredii (strain NBRC 101917 / NGR234).